The following is a 231-amino-acid chain: Androgen-dependent TFPI-regulating protein (231 aa).

The Cytoplasmic portion of the chain corresponds to 1–7 (MTRTTTC). The chain crosses the membrane as a helical span at residues 8 to 28 (VYHFLVWNWYIFLNYYIPLIG). The Extracellular segment spans residues 29 to 45 (KDDEKLKEFHDGGRSKY). The helical transmembrane segment at 46–66 (LTLLNLLLQAIFFGVACLDDV) threads the bilayer. Over 67-85 (LKRIIGRKDIKFITSTRDL) the chain is Cytoplasmic. A helical transmembrane segment spans residues 86–106 (LFSTLVFPISTFIFLVFWTLF). Residues 107 to 123 (YYDRSLIYPKGLDDYFP) are Extracellular-facing. Residues 124–144 (AWLNHAMHTYILLFVLVETIL) form a helical membrane-spanning segment. At 145–154 (RPHHYPSKKL) the chain is on the cytoplasmic side. The chain crosses the membrane as a helical span at residues 155–172 (GLALLGACNLAYITRVLW). The Extracellular segment spans residues 173-190 (RYSQTGNWVYPVFASLNP). The helical transmembrane segment at 191–211 (LGIIIFFLVCYILNASIYLVG) threads the bilayer. The Cytoplasmic portion of the chain corresponds to 212–231 (EKINHWKWGATVKPLMKKKK).

The protein belongs to the AIG1 family. As to expression, highly expressed in flank organs and weakly in testis and earlobes.

It localises to the cell membrane. It catalyses the reaction 9-hexadecanoyloxy-octadecanoate + H2O = 9-hydroxy-octadecanoate + hexadecanoate + H(+). It carries out the reaction 12-hexadecanoyloxy-octadecanoate + H2O = 12-hydroxyoctadecanoate + hexadecanoate + H(+). The catalysed reaction is 9-(9Z-hexadecenoyloxy)-octadecanoate + H2O = (9Z)-hexadecenoate + 9-hydroxy-octadecanoate + H(+). The enzyme catalyses 12-(9Z-hexadecenoyloxy)-octadecanoate + H2O = 12-hydroxyoctadecanoate + (9Z)-hexadecenoate + H(+). It catalyses the reaction 13-(9Z-hexadecenoyloxy)-octadecanoate + H2O = 13-hydroxy-octadecanoate + (9Z)-hexadecenoate + H(+). It carries out the reaction 9-octadecanoyloxy-octadecanoate + H2O = 9-hydroxy-octadecanoate + octadecanoate + H(+). The catalysed reaction is 12-octadecanoyloxy-octadecanoate + H2O = 12-hydroxyoctadecanoate + octadecanoate + H(+). The enzyme catalyses 13-octadecanoyloxy-octadecanoate + H2O = 13-hydroxy-octadecanoate + octadecanoate + H(+). It catalyses the reaction 9-(9Z-octadecenoyloxy)-octadecanoate + H2O = 9-hydroxy-octadecanoate + (9Z)-octadecenoate + H(+). It carries out the reaction 12-(9Z-octadecenoyloxy)-octadecanoate + H2O = 12-hydroxyoctadecanoate + (9Z)-octadecenoate + H(+). The catalysed reaction is 13-(9Z-octadecenoyloxy)-octadecanoate + H2O = 13-hydroxy-octadecanoate + (9Z)-octadecenoate + H(+). The enzyme catalyses 5-(9Z-octadecenoyloxy)-octadecanoate + H2O = 5-hydroxy-octadecanoate + (9Z)-octadecenoate + H(+). In terms of biological role, hydrolyzes bioactive fatty-acid esters of hydroxy-fatty acids (FAHFAs), but not other major classes of lipids. Shows a preference for FAHFAs with branching distal from the carboxylate head group of the lipids. Regulates the expression and the cell-associated anticoagulant activity of the inhibitor TFPI in endothelial cells (in vitro). In Mesocricetus auratus (Golden hamster), this protein is Androgen-dependent TFPI-regulating protein (ADTRP).